The chain runs to 216 residues: Probable GTP-binding protein EngB (216 aa).

The EngB-type G domain occupies 24 to 205 (ATPEIAFVGR…WARLAALAAE (182 aa)). Residues 32-39 (GRSNVGKS), 59-63 (GRTRA), 86-89 (DLPG), 153-156 (TKTD), and 184-186 (FSA) each bind GTP. Serine 39 and threonine 61 together coordinate Mg(2+).

It belongs to the TRAFAC class TrmE-Era-EngA-EngB-Septin-like GTPase superfamily. EngB GTPase family. The cofactor is Mg(2+).

Functionally, necessary for normal cell division and for the maintenance of normal septation. The polypeptide is Probable GTP-binding protein EngB (Anaeromyxobacter dehalogenans (strain 2CP-C)).